The primary structure comprises 201 residues: uncharacterized protein (201 aa).

A helical transmembrane segment spans residues 11–31; sequence IWKSLYLLIIVGMLYIGYILI.

The protein resides in the membrane. This is an uncharacterized protein from Rickettsia prowazekii (strain Madrid E).